The sequence spans 404 residues: Calcium/calmodulin-dependent protein kinase cmkB (404 aa).

The 262-residue stretch at 18-279 folds into the Protein kinase domain; sequence YKTGKTLGAG…AHQALQHPWI (262 aa). Residues 24-32 and K47 contribute to the ATP site; that span reads LGAGLYSVV. The active-site Proton acceptor is D141. Residue T179 is modified to Phosphothreonine; by cmkC. The autoinhibitory domain stretch occupies residues 279–322; sequence INPPYDTTDDLGSGEDLLPNIKKNFNARRTLHKAIDTVRAINKL. The interval 301-323 is calmodulin-binding; it reads KNFNARRTLHKAIDTVRAINKLR. A disordered region spans residues 336–404; that stretch reads VDPKPEHVNG…WSRTAPRSER (69 aa). Basic and acidic residues-rich tracts occupy residues 338–370 and 379–389; these read PKPE…DSRS and QIREQERKVKE.

This sequence belongs to the protein kinase superfamily. CAMK Ser/Thr protein kinase family. CaMK subfamily. Phosphorylated by cmkC on Thr-179.

It carries out the reaction L-seryl-[protein] + ATP = O-phospho-L-seryl-[protein] + ADP + H(+). The enzyme catalyses L-threonyl-[protein] + ATP = O-phospho-L-threonyl-[protein] + ADP + H(+). Its activity is regulated as follows. Activated by Ca(2+)/calmodulin. Binding of calmodulin results in conformational change that relieves intrasteric autoinhibition and allows phosphorylation of Thr-179 within the activation loop by cmkC. Its function is as follows. Calcium/calmodulin-dependent protein kinase that operates in the calcium-triggered CaMKK-CaMK1 signaling cascade. Required in G1-phase of the cell cycle for proper timing of the initial nuclear division after germination, but not for subsequent mitoses. Required for the normal temporal regulation of nimX activity. This is Calcium/calmodulin-dependent protein kinase cmkB from Emericella nidulans (Aspergillus nidulans).